The following is a 541-amino-acid chain: Membrane protein insertase YidC (541 aa).

A run of 5 helical transmembrane segments spans residues 6–26, 349–369, 420–440, 457–477, and 500–520; these read NILL…WQAD, FVGN…GLLF, GGCL…WVLL, LSVQ…MFVM, and VIFT…WLVG.

Belongs to the OXA1/ALB3/YidC family. Type 1 subfamily. Interacts with the Sec translocase complex via SecD. Specifically interacts with transmembrane segments of nascent integral membrane proteins during membrane integration.

The protein resides in the cell inner membrane. In terms of biological role, required for the insertion and/or proper folding and/or complex formation of integral membrane proteins into the membrane. Involved in integration of membrane proteins that insert both dependently and independently of the Sec translocase complex, as well as at least some lipoproteins. Aids folding of multispanning membrane proteins. This is Membrane protein insertase YidC from Shewanella sp. (strain MR-7).